The primary structure comprises 454 residues: GTPase Der (454 aa).

EngA-type G domains follow at residues 4–167 (AIVA…SEDK) and 188–363 (LELA…ASWQ). Residues 10–17 (GKPNVGKS), 56–60 (DTPGL), 121–124 (NKTE), 194–201 (GRPNCGKS), 241–245 (DTAGV), and 306–309 (NKWD) each bind GTP. The 87-residue stretch at 364 to 450 (KRVTTGTLNQ…PVRLSFVKGK (87 aa)) folds into the KH-like domain.

The protein belongs to the TRAFAC class TrmE-Era-EngA-EngB-Septin-like GTPase superfamily. EngA (Der) GTPase family. Associates with the 50S ribosomal subunit.

Functionally, GTPase that plays an essential role in the late steps of ribosome biogenesis. The sequence is that of GTPase Der from Orientia tsutsugamushi (strain Ikeda) (Rickettsia tsutsugamushi).